A 786-amino-acid polypeptide reads, in one-letter code: Rho GTPase-activating protein 10 (786 aa).

A BAR domain is found at 7-262 (EFSDCYLDSP…IRQNPKDHKR (256 aa)). Positions 265-372 (QFTAEGYLYV…WLEALGGKEA (108 aa)) constitute a PH domain. In terms of domain architecture, Rho-GAP spans 389 to 574 (AQLDKMGFTI…ILIENHEKIF (186 aa)). 2 disordered regions span residues 576–608 (TPPD…QRTK) and 621–727 (EDGD…PPES). Residues 599–608 (QSKRQGQRTK) show a composition bias toward basic residues. The segment covering 634 to 651 (PTSSLDSLSSPSPVTTAV) has biased composition (low complexity). Over residues 676 to 688 (IPGQTRSSMVQWL) the composition is skewed to polar residues. Residues 689-712 (NPQSPTTTSSNSAVTPLSPGSSPF) are compositionally biased toward low complexity. One can recognise an SH3 domain in the interval 728–786 (IRSRKARAVYPCEAEHSSELSFEIGAIFEDVQTSREPGWLEGTLNGKRGLIPQNYVKLL).

As to quaternary structure, interacts with PKN3. Interacts with caspase-activated PAK2 proteolytic fragment PAK-2p34; the interaction does not affect GRAF2/ARHGAP10 GTPase activation activity towards RHOA and CDC42. Interacts via its SH3 domain with PTK2/FAK1. Interacts with PTK2B/PYK2; the interaction negatively regulates GRAF2/ARHGAP10 GTPase-activating activity. Interacts with MICAL1 and WDR44; complex formation might transit from GRAF2/ARHGAP10-MICAL1 to GRAF2/ARHGAP10-WDR44 complexes. Phosphorylated. Phosphorylated in vitro by constitutive active PKN3. As to expression, high levels of expression in heart and skeletal muscle.

Its subcellular location is the cytoplasm. The protein resides in the perinuclear region. It localises to the cell membrane. It is found in the endosome membrane. GTPase-activating protein that catalyzes the conversion of active GTP-bound Rho GTPases to their inactive GDP-bound form, thus suppressing various Rho GTPase-mediated cellular processes. Also converts Cdc42 to an inactive GDP-bound state. Essential for PTKB2 regulation of cytoskeletal organization via Rho family GTPases. Inhibits PAK2 proteolytic fragment PAK-2p34 kinase activity and changes its localization from the nucleus to the perinuclear region. Stabilizes PAK-2p34 thereby increasing stimulation of cell death. Associates with MICAL1 on the endosomal membrane to promote Rab8-Rab10-dependent tubule extension. After dissociation with MICAL1, recruits WDR44 which connects the endoplasmic reticulum (ER) with the endosomal tubule, thereby participating in the export of a subset of neosynthesized proteins. The polypeptide is Rho GTPase-activating protein 10 (ARHGAP10) (Homo sapiens (Human)).